The primary structure comprises 150 residues: UPF0178 protein Shewana3_1627 (150 aa).

Belongs to the UPF0178 family.

The protein is UPF0178 protein Shewana3_1627 of Shewanella sp. (strain ANA-3).